The following is a 408-amino-acid chain: Histidine--tRNA ligase (408 aa).

Belongs to the class-II aminoacyl-tRNA synthetase family. Homodimer.

Its subcellular location is the cytoplasm. The enzyme catalyses tRNA(His) + L-histidine + ATP = L-histidyl-tRNA(His) + AMP + diphosphate + H(+). The protein is Histidine--tRNA ligase of Wolbachia pipientis wMel.